A 690-amino-acid chain; its full sequence is Translation factor GUF1, mitochondrial (690 aa).

The segment at 40–68 (SVTVPAARRHNSTKSTNSTTSTNSTTATS) is disordered. Residues 52-68 (TKSTNSTTSTNSTTATS) show a composition bias toward low complexity. Positions 89-272 (ERYRNFCIVA…AVIKKMPAPV (184 aa)) constitute a tr-type G domain. Residues 98 to 105 (AHIDHGKS), 165 to 169 (DTPGH), and 219 to 222 (NKID) each bind GTP.

Belongs to the TRAFAC class translation factor GTPase superfamily. Classic translation factor GTPase family. LepA subfamily.

It is found in the mitochondrion inner membrane. The enzyme catalyses GTP + H2O = GDP + phosphate + H(+). Functionally, promotes mitochondrial protein synthesis. May act as a fidelity factor of the translation reaction, by catalyzing a one-codon backward translocation of tRNAs on improperly translocated ribosomes. Binds to mitochondrial ribosomes in a GTP-dependent manner. In Sordaria macrospora (strain ATCC MYA-333 / DSM 997 / K(L3346) / K-hell), this protein is Translation factor GUF1, mitochondrial.